Reading from the N-terminus, the 370-residue chain is Leucine-rich repeat-containing protein 19 (370 aa).

Residues 1–24 (MKVTGITILFWPLSMILLSDKIQS) form the signal peptide. At 25-270 (SKREVQCNFT…SEHEPLGKSW (246 aa)) the chain is on the extracellular side. 4 N-linked (GlcNAc...) asparagine glycosylation sites follow: Asn-32, Asn-37, Asn-62, and Asn-95. LRR repeat units follow at residues 46-71 (KKDV…VLQT), 72-95 (YFLL…GFGN), 96-119 (LSSL…AFLG), 120-143 (LNKL…VFVP), and 145-168 (RSLK…LFHL). The region spanning 176 to 227 (NLWNCSCSLFNLQNWLNTSNVTLENENITMCSYPNSLQSYNIKTVPHKAECH) is the LRRCT domain. 6 N-linked (GlcNAc...) asparagine glycosylation sites follow: Asn-179, Asn-192, Asn-195, Asn-202, Asn-251, and Asn-256. Residues 271-291 (AFLVGVVVTVLTTSLLIFIAI) traverse the membrane as a helical segment. Residues 292–370 (KCPIWYNILL…IDIHELCEEN (79 aa)) lie on the Cytoplasmic side of the membrane.

In terms of assembly, interacts with TRAF2 and TRAF6. As to expression, expressed in renal collecting duct epithelial cells.

It localises to the membrane. Its activity is regulated as follows. Activated by TLR ligands such as LPS, bacterial DNA and peptidoglycan. Its function is as follows. Pathogen-recognition receptor which mediates the activation of TRAF2- and TRAF6 NF-kappa-B signaling pathways and induces the expression of pro-inflammatory cytokines. In kidney, prevents infection by uropathogenic bacteria by inducing the production of cytokines, chemokines and antimicrobial substances. In gut, involved in host-microbiota interactions, plays a critical role in promoting the recruitment of immune cells and intestinal inflammation. This is Leucine-rich repeat-containing protein 19 from Homo sapiens (Human).